We begin with the raw amino-acid sequence, 80 residues long: Acyl carrier protein (80 aa).

One can recognise a Carrier domain in the interval E4 to Q79. S39 carries the post-translational modification O-(pantetheine 4'-phosphoryl)serine.

It belongs to the acyl carrier protein (ACP) family. In terms of processing, 4'-phosphopantetheine is transferred from CoA to a specific serine of apo-ACP by AcpS. This modification is essential for activity because fatty acids are bound in thioester linkage to the sulfhydryl of the prosthetic group.

It localises to the cytoplasm. It functions in the pathway lipid metabolism; fatty acid biosynthesis. Carrier of the growing fatty acid chain in fatty acid biosynthesis. This is Acyl carrier protein from Prochlorococcus marinus (strain SARG / CCMP1375 / SS120).